Consider the following 234-residue polypeptide: Probable chemoreceptor glutamine deamidase CheD 1 (234 aa).

The disordered stretch occupies residues 183 to 234 (AREAAGPRGERAARARPRVELFGTPAPKAQATPRIELFGTRATQPATRKQEA). Positions 190-201 (RGERAARARPRV) are enriched in basic and acidic residues. Polar residues predominate over residues 223 to 234 (RATQPATRKQEA).

Belongs to the CheD family.

The catalysed reaction is L-glutaminyl-[protein] + H2O = L-glutamyl-[protein] + NH4(+). In terms of biological role, probably deamidates glutamine residues to glutamate on methyl-accepting chemotaxis receptors (MCPs), playing an important role in chemotaxis. In Burkholderia thailandensis (strain ATCC 700388 / DSM 13276 / CCUG 48851 / CIP 106301 / E264), this protein is Probable chemoreceptor glutamine deamidase CheD 1.